A 306-amino-acid polypeptide reads, in one-letter code: Agmatinase (306 aa).

Mn(2+)-binding residues include His126, Asp149, His151, Asp153, Asp230, and Asp232.

It belongs to the arginase family. Agmatinase subfamily. Mn(2+) is required as a cofactor.

It catalyses the reaction agmatine + H2O = urea + putrescine. It functions in the pathway amine and polyamine biosynthesis; putrescine biosynthesis via agmatine pathway; putrescine from agmatine: step 1/1. In terms of biological role, catalyzes the formation of putrescine from agmatine. The protein is Agmatinase of Shigella dysenteriae serotype 1 (strain Sd197).